A 304-amino-acid polypeptide reads, in one-letter code: Ornithine carbamoyltransferase (304 aa).

Residues 53–56 (STRT), Gln-80, Arg-104, and 131–134 (HPCQ) contribute to the carbamoyl phosphate site. L-ornithine is bound by residues Asn-162, Asp-222, and 226–227 (SM). Carbamoyl phosphate is bound by residues 261–262 (CL) and Arg-289.

It belongs to the aspartate/ornithine carbamoyltransferase superfamily. OTCase family.

It localises to the cytoplasm. The catalysed reaction is carbamoyl phosphate + L-ornithine = L-citrulline + phosphate + H(+). It functions in the pathway amino-acid biosynthesis; L-arginine biosynthesis; L-arginine from L-ornithine and carbamoyl phosphate: step 1/3. In terms of biological role, reversibly catalyzes the transfer of the carbamoyl group from carbamoyl phosphate (CP) to the N(epsilon) atom of ornithine (ORN) to produce L-citrulline. This is Ornithine carbamoyltransferase from Rhizobium johnstonii (strain DSM 114642 / LMG 32736 / 3841) (Rhizobium leguminosarum bv. viciae).